We begin with the raw amino-acid sequence, 511 residues long: MNLLKPLISVSLMTLISRILGFVRDILIASIFGASMFTDAFFISFKIPNLLRRIFSDGTFSQAFIPVLMEYKSDKNEKNIKNFLSSILGFMSFFLLLLTILGGFFSQSIILIRAPGFLNPPEKLILSTNLLRIMFPYILLISLSSLCSSILNSWNYFSIPAFSPIFLNISIIFFSVFFSSFFCPSIIVLAWSVIIGGLVQLLYQLPFLYKINMLVLPNFHWNNIGLLRILKKMGPAILGASANQISLIINTIFSSLLNSGSISWIYYADRLIEFPVGILGVSLSTVLFTSLAKNYKNGIKLEYKKLLDWGLRISLIVSLPGSVILFFLAKPVIIVLFQYGKFTDFDVLMTARVLKLYSCGLISFIFVKILSSAFYACEEIKIPMKASLFTLLLNQLMNPFLIFYFQHAGIALSLSITSWVNFLLLSRKLYQRKIVSLQRSEFIFIIYIILATLVMIVILFVVLHMMSVWNIGTFINKIIRLFFGKYVSGITYLFMMNILGIRLLNFFYKNS.

11 consecutive transmembrane segments (helical) span residues 25–45, 85–105, 133–153, 156–178, 245–265, 271–291, 315–335, 356–376, 400–420, 442–462, and 481–501; these read DILIASIFGASMFTDAFFISF, SSILGFMSFFLLLLTILGGFF, IMFPYILLISLSSLCSSILNS, YFSIPAFSPIFLNISIIFFSVFF, ISLIINTIFSSLLNSGSISWI, LIEFPVGILGVSLSTVLFTSL, LIVSLPGSVILFFLAKPVIIV, LYSCGLISFIFVKILSSAFYA, FLIFYFQHAGIALSLSITSWV, FIFIIYIILATLVMIVILFVV, and LFFGKYVSGITYLFMMNILGI.

Belongs to the MurJ/MviN family.

The protein resides in the cell inner membrane. Its pathway is cell wall biogenesis; peptidoglycan biosynthesis. Functionally, involved in peptidoglycan biosynthesis. Transports lipid-linked peptidoglycan precursors from the inner to the outer leaflet of the cytoplasmic membrane. This chain is Probable lipid II flippase MurJ, found in Buchnera aphidicola subsp. Acyrthosiphon pisum (strain APS) (Acyrthosiphon pisum symbiotic bacterium).